A 237-amino-acid polypeptide reads, in one-letter code: Ribose-5-phosphate isomerase A (237 aa).

Residues 30–33 (SGST), 87–90 (DGAD), and 100–103 (KGGG) contribute to the substrate site. E109 acts as the Proton acceptor in catalysis. K127 provides a ligand contact to substrate.

The protein belongs to the ribose 5-phosphate isomerase family. Homodimer.

The enzyme catalyses aldehydo-D-ribose 5-phosphate = D-ribulose 5-phosphate. The protein operates within carbohydrate degradation; pentose phosphate pathway; D-ribose 5-phosphate from D-ribulose 5-phosphate (non-oxidative stage): step 1/1. Catalyzes the reversible conversion of ribose-5-phosphate to ribulose 5-phosphate. The sequence is that of Ribose-5-phosphate isomerase A from Prochlorococcus marinus (strain MIT 9211).